The chain runs to 476 residues: Cysteine--tRNA ligase (476 aa).

Residue C31 participates in Zn(2+) binding. The 'HIGH' region motif lies at 33-43 (PTVYNYAHIGN). C211, H236, and E240 together coordinate Zn(2+). The 'KMSKS' region signature appears at 269-273 (KMSKS). ATP is bound at residue K272.

This sequence belongs to the class-I aminoacyl-tRNA synthetase family. As to quaternary structure, monomer. The cofactor is Zn(2+).

The protein resides in the cytoplasm. The enzyme catalyses tRNA(Cys) + L-cysteine + ATP = L-cysteinyl-tRNA(Cys) + AMP + diphosphate. The protein is Cysteine--tRNA ligase of Xanthomonas euvesicatoria pv. vesicatoria (strain 85-10) (Xanthomonas campestris pv. vesicatoria).